Reading from the N-terminus, the 1396-residue chain is DNA-directed RNA polymerase subunit beta' (1396 aa).

Residues Cys-72, Cys-74, Cys-87, and Cys-90 each contribute to the Zn(2+) site. Asp-463, Asp-465, and Asp-467 together coordinate Mg(2+). 4 residues coordinate Zn(2+): Cys-814, Cys-889, Cys-896, and Cys-899.

The protein belongs to the RNA polymerase beta' chain family. In terms of assembly, the RNAP catalytic core consists of 2 alpha, 1 beta, 1 beta' and 1 omega subunit. When a sigma factor is associated with the core the holoenzyme is formed, which can initiate transcription. It depends on Mg(2+) as a cofactor. Zn(2+) is required as a cofactor.

It carries out the reaction RNA(n) + a ribonucleoside 5'-triphosphate = RNA(n+1) + diphosphate. Functionally, DNA-dependent RNA polymerase catalyzes the transcription of DNA into RNA using the four ribonucleoside triphosphates as substrates. The chain is DNA-directed RNA polymerase subunit beta' from Chlamydia trachomatis serovar L2 (strain ATCC VR-902B / DSM 19102 / 434/Bu).